The primary structure comprises 497 residues: MESSEDQPGPQPQYPGNHCIRDGDFVVLKREDVFKAVQVQRRKKVTFEKQWFYLDNIIGHSYGTTFEVTNGGSLQPKKKKEEPTSETKEAGTDNRNIIDDGKSQKLTQDDIKALKDKGIKGEEIVQQLIENSTTFRDKTEFAQDKYIKKKKKKYEAMITVVKPSTRILSVMYYAREPGKINHMRYDTLAQMLTLGNIRAGNKMIVMETCAGLVLGAMMERMGGFGSIIQLYPGGGPVRAATACFGFPKSFLSGLYEFPLNKVDSLLNGTFSAEMLSSEPKDIASVEESNGTLEEKQTSEQENEDSIAEAPESNHPEEQERMEIVSQDPDYKEPKESGSKKDYIQEKQRRQEEQKKRHLEAAALLSERNADGLIVASRFHPTPLLLSLLDFVAPSRPFVVYCQYKEPLLECYTKLRERGGVINLRLSETWLRNYQVLPDRSHPKLLMSGGGGYLLSGFTVAMDNLKADPSLKSSTSTLESHKTEEPAAKKRKCPESDS.

The segment at 69-102 (TNGGSLQPKKKKEEPTSETKEAGTDNRNIIDDGK) is disordered. The span at 79 to 102 (KKEEPTSETKEAGTDNRNIIDDGK) shows a compositional bias: basic and acidic residues. Residues 94-104 (NRNIIDDGKSQ) form a substrate region. The residue at position 107 (threonine 107) is a Phosphothreonine. Substrate stretches follow at residues 145 to 154 (KYIKKKKKKY) and 175 to 182 (REPGKINH). Positions 276–354 (SSEPKDIASV…EKQRRQEEQK (79 aa)) are disordered. 2 positions are modified to phosphoserine: serine 298 and serine 305. Residues 311–354 (ESNHPEEQERMEIVSQDPDYKEPKESGSKKDYIQEKQRRQEEQK) show a composition bias toward basic and acidic residues. Arginine 349 and arginine 377 together coordinate substrate. Substrate stretches follow at residues 415–423 (RERGGVINL) and 434–441 (QVLPDRSH). The tract at residues 468–497 (PSLKSSTSTLESHKTEEPAAKKRKCPESDS) is disordered. Residues 478 to 497 (ESHKTEEPAAKKRKCPESDS) show a composition bias toward basic and acidic residues.

This sequence belongs to the TRM6/GCD10 family. In terms of assembly, heterotetramer; composed of two copies of TRMT6 and two copies of TRMT61A.

The protein localises to the nucleus. Substrate-binding subunit of tRNA (adenine-N(1)-)-methyltransferase, which catalyzes the formation of N(1)-methyladenine at position 58 (m1A58) in initiator methionyl-tRNA. Together with the TRMT61A catalytic subunit, part of a mRNA N(1)-methyltransferase complex that mediates methylation of adenosine residues at the N(1) position of a small subset of mRNAs: N(1) methylation takes place in tRNA T-loop-like structures of mRNAs and is only present at low stoichiometries. This Bos taurus (Bovine) protein is tRNA (adenine(58)-N(1))-methyltransferase non-catalytic subunit TRM6 (TRMT6).